The chain runs to 339 residues: DNA-directed RNA polymerase subunit alpha (339 aa).

The tract at residues 1 to 233 (MVREEVAGST…DLFLPFLHAE (233 aa)) is alpha N-terminal domain (alpha-NTD). The segment at 264–339 (KKGIPLNCIF…IDLLKNKLSF (76 aa)) is alpha C-terminal domain (alpha-CTD).

It belongs to the RNA polymerase alpha chain family. In terms of assembly, in plastids the minimal PEP RNA polymerase catalytic core is composed of four subunits: alpha, beta, beta', and beta''. When a (nuclear-encoded) sigma factor is associated with the core the holoenzyme is formed, which can initiate transcription.

It is found in the plastid. The protein localises to the chloroplast. The enzyme catalyses RNA(n) + a ribonucleoside 5'-triphosphate = RNA(n+1) + diphosphate. In terms of biological role, DNA-dependent RNA polymerase catalyzes the transcription of DNA into RNA using the four ribonucleoside triphosphates as substrates. The polypeptide is DNA-directed RNA polymerase subunit alpha (Thinopyrum elongatum (Tall wheatgrass)).